Reading from the N-terminus, the 443-residue chain is Lysine-specific demethylase 8 (443 aa).

Basic and acidic residues predominate over residues 139–165; the sequence is TKLEAERGVREPGLESSKLHSPGEHSN. The disordered stretch occupies residues 139–174; the sequence is TKLEAERGVREPGLESSKLHSPGEHSNKKSFASVTG. The region spanning 298–443 is the JmjC domain; sequence GYLAQHQLFE…LSFSVSFWWS (146 aa). Fe cation contacts are provided by His-348, Asp-350, and His-427.

Fe(2+) serves as cofactor.

The protein localises to the nucleus. It carries out the reaction N(6),N(6)-dimethyl-L-lysyl(36)-[histone H3] + 2 2-oxoglutarate + 2 O2 = L-lysyl(36)-[histone H3] + 2 formaldehyde + 2 succinate + 2 CO2. Functionally, histone demethylase required for G2/M phase cell cycle progression. Specifically demethylates dimethylated 'Lys-36' (H3K36me2) of histone H3, an epigenetic repressive mark, thereby acting as a transcription activator. May play a role in the regulation of the circadian clock. The polypeptide is Lysine-specific demethylase 8 (kdm8) (Xenopus tropicalis (Western clawed frog)).